Reading from the N-terminus, the 371-residue chain is Glycosyltransferase 8 domain-containing protein 1 (371 aa).

The Cytoplasmic segment spans residues 1–7; it reads MSFRKVN. Residues 8–28 form a helical; Signal-anchor for type II membrane protein membrane-spanning segment; the sequence is IVILVLAVALFLLVLHHNFLG. Residues 29–371 are Lumenal-facing; that stretch reads LSSLLRNEVS…RRHVEISNTK (343 aa). N103 and N257 each carry an N-linked (GlcNAc...) asparagine glycan.

It belongs to the glycosyltransferase 8 family.

It localises to the membrane. This is Glycosyltransferase 8 domain-containing protein 1 (GLT8D1) from Bos taurus (Bovine).